Here is a 368-residue protein sequence, read N- to C-terminus: C-X-C chemokine receptor type 3 (368 aa).

At 1–53 (MVLEVSDHQVLNDAEVAALLENFSSSYDYGENESDSCCTSPPCPQDFSLNFDR) the chain is on the extracellular side. Residue Asn-22 is glycosylated (N-linked (GlcNAc...) asparagine). Sulfotyrosine occurs at positions 27 and 29. Residue Asn-32 is glycosylated (N-linked (GlcNAc...) asparagine). Residues 54–80 (AFLPALYSLLFLLGLLGNGAVAAVLLS) form a helical membrane-spanning segment. The Cytoplasmic portion of the chain corresponds to 81 to 89 (RRTALSSTD). The chain crosses the membrane as a helical span at residues 90–110 (TFLLHLAVADTLLVLTLPLWA). Over 111 to 125 (VDAAVQWVFGSGLCK) the chain is Extracellular. An intrachain disulfide couples Cys-124 to Cys-203. The chain crosses the membrane as a helical span at residues 126–147 (VAGALFNINFYAGALLLACISF). Residues 148–169 (DRYLNIVHATQLYRRGPPARVT) lie on the Cytoplasmic side of the membrane. A helical transmembrane segment spans residues 170–189 (LTCLAVWGLCLLFALPDFIF). Residues 190-212 (LSAHHDERLNATHCQYNFPQVGR) lie on the Extracellular side of the membrane. A helical membrane pass occupies residues 213–233 (TALRVLQLVAGFLLPLLVMAY). Residues 234-255 (CYAHILAVLLVSRGQRRLRAMR) are Cytoplasmic-facing. Residues 256–277 (LVVVVVVAFALCWTPYHLVVLV) traverse the membrane as a helical segment. At 278 to 298 (DILMDLGALARNCGRESRVDV) the chain is on the extracellular side. The chain crosses the membrane as a helical span at residues 299–321 (AKSVTSGLGYMHCCLNPLLYAFV). At 322–368 (GVKFRERMWMLLLRLGCPNQRGLQRQPSSSRRDSSWSETSEASYSGL) the chain is on the cytoplasmic side. Residues 342 to 368 (RGLQRQPSSSRRDSSWSETSEASYSGL) form a disordered region. Residues 357–368 (WSETSEASYSGL) are compositionally biased toward low complexity.

The protein belongs to the G-protein coupled receptor 1 family. In terms of assembly, homomer. Forms heteromers with ACKR4. Interacts with PF4/CXCL4. Sulfation on Tyr-27 and Tyr-29 is essential for CXCL10 binding and subsequent signal transduction induction. In terms of processing, N-glycosylated. Isoform 1 and isoform 2 are mainly expressed in heart, kidney, liver and skeletal muscle. Isoform 1 is also expressed in placenta. Isoform 2 is expressed in endothelial cells. Expressed in T-cells (at protein level).

The protein resides in the cell membrane. In terms of biological role, receptor for the C-X-C chemokine CXCL9, CXCL10 and CXCL11 and mediates the proliferation, survival and angiogenic activity of human mesangial cells (HMC) through a heterotrimeric G-protein signaling pathway. Binds to CCL21. Probably promotes cell chemotaxis response. Upon activation by PF4, induces activated T-lymphocytes migration mediated via downstream Ras/extracellular signal-regulated kinase (ERK) signaling. Functionally, receptor for the C-X-C chemokine CXCL4 and also mediates the inhibitory activities of CXCL9, CXCL10 and CXCL11 on the proliferation, survival and angiogenic activity of human microvascular endothelial cells (HMVEC) through a cAMP-mediated signaling pathway. Does not promote cell chemotaxis respons. Interaction with CXCL4 or CXCL10 leads to activation of the p38MAPK pathway and contributes to inhibition of angiogenesis. Overexpression in renal cancer cells down-regulates expression of the anti-apoptotic protein HMOX1 and promotes apoptosis. Its function is as follows. Mediates the activity of CXCL11. In Homo sapiens (Human), this protein is C-X-C chemokine receptor type 3 (CXCR3).